The primary structure comprises 418 residues: Vacuole membrane protein HFL1 (418 aa).

The Extracellular segment spans residues 1–5 (MENKL). The helical transmembrane segment at 6 to 26 (LCWWLYWPCVYSSIIATIISF) threads the bilayer. Residues 27–43 (YTITRHLLNYRKPYEQR) lie on the Cytoplasmic side of the membrane. A helical transmembrane segment spans residues 44-64 (LSIRILLLVPIFSVSCASGII). The Extracellular portion of the chain corresponds to 65–78 (KPEAAQFYVDPIRE). The chain crosses the membrane as a helical span at residues 79–99 (FYEAFVIYTFFTFLTLLLGGE). Residues 100-141 (RNIITVLSLNHAPTRHPIPLIGKICKPIDLSDPFDFLFVKKG) lie on the Cytoplasmic side of the membrane. A helical membrane pass occupies residues 142–162 (ILQYVWFKPFYCFGTLICSAW). Residues 163–168 (KLPKFE) lie on the Extracellular side of the membrane. The chain crosses the membrane as a helical span at residues 169 to 189 (IFLNVFYNISVTWSLYSLALF). Topologically, residues 190–205 (WKCLYPELTPYKPWLK) are cytoplasmic. Residues 206 to 226 (FLCVKLIIFASYWQSIIIQGL) traverse the membrane as a helical segment. Residues 227-246 (VVTGKLGTGNQDRTSGYVYK) lie on the Extracellular side of the membrane. The chain crosses the membrane as a helical span at residues 247–267 (NGLLCIEMVPFAILHAVAFPW). The Cytoplasmic segment spans residues 268 to 418 (NKYTAFSIPY…DVQSRSSMAC (151 aa)). The tract at residues 379–402 (RTFPEDPNYPVVHDYTMGHRYSRS) is ATG8-interacting region.

It belongs to the TMEM184 family. In terms of assembly, interacts with ATG8.

It localises to the vacuole membrane. In terms of biological role, vacuole membrane protein that recruits ATG8 to facilitate the degradation of vacuolar integral membrane proteins during early-stationary vacuole turnover (EVT) when cells enter stationary phase. This chain is Vacuole membrane protein HFL1, found in Saccharomyces cerevisiae (strain ATCC 204508 / S288c) (Baker's yeast).